A 310-amino-acid polypeptide reads, in one-letter code: tRNA-cytidine(32) 2-sulfurtransferase (310 aa).

The PP-loop motif motif lies at 45–50 (SGGKDS). Positions 120, 123, and 211 each coordinate [4Fe-4S] cluster.

This sequence belongs to the TtcA family. As to quaternary structure, homodimer. Mg(2+) serves as cofactor. Requires [4Fe-4S] cluster as cofactor.

The protein resides in the cytoplasm. The enzyme catalyses cytidine(32) in tRNA + S-sulfanyl-L-cysteinyl-[cysteine desulfurase] + AH2 + ATP = 2-thiocytidine(32) in tRNA + L-cysteinyl-[cysteine desulfurase] + A + AMP + diphosphate + H(+). The protein operates within tRNA modification. In terms of biological role, catalyzes the ATP-dependent 2-thiolation of cytidine in position 32 of tRNA, to form 2-thiocytidine (s(2)C32). The sulfur atoms are provided by the cysteine/cysteine desulfurase (IscS) system. This is tRNA-cytidine(32) 2-sulfurtransferase from Shewanella sp. (strain ANA-3).